The chain runs to 100 residues: Pancreatic polypeptide prohormone (100 aa).

A signal peptide spans 1-29 (MAVAYCCLSLFLVSTWVALLLQPLQGTWG). Tyrosine amide is present on Tyr65.

It belongs to the NPY family. In terms of processing, no icosapeptide-like peptide is cleaved from the C-terminal.

It is found in the secreted. In terms of biological role, hormone secreted by pancreatic cells that acts as a regulator of pancreatic and gastrointestinal functions probably by signaling through the G protein-coupled receptor NPY4R2. In Mus musculus (Mouse), this protein is Pancreatic polypeptide prohormone (Ppy).